The sequence spans 914 residues: MGDSRDLCPHLDSIGEVTKEDLLLKSKGTCQSCGVTGPNLWACLQVACPYVGCGESFADHSTIHAQAKKHNLTVNLTTFRLWCYACEKEVFLEQRLAAPLLGSSSKFSEQDSPPPSHPLKAVPIAVADEGESESEDDDLKPRGLTGMKNLGNSCYMNAALQALSNCPPLTQFFLECGGLVRTDKKPALCKSYQKLVSEVWHKKRPSYVVPTSLSHGIKLVNPMFRGYAQQDTQEFLRCLMDQLHEELKEPVVATVALTEARDSDSSDTDEKREGDRSPSEDEFLSCDSSSDRGEGDGQGRGGGSSQAETELLIPDEAGRAISEKERMKDRKFSWGQQRTNSEQVDEDADVDTAMAALDDQPAEAQPPSPRSSSPCRTPEPDNDAHLRSSSRPCSPVHHHEGHAKLSSSPPRASPVRMAPSYVLKKAQVLSAGSRRRKEQRYRSVISDIFDGSILSLVQCLTCDRVSTTVETFQDLSLPIPGKEDLAKLHSAIYQNVPAKPGACGDSYAAQGWLAFIVEYIRRFVVSCTPSWFWGPVVTLEDCLAAFFAADELKGDNMYSCERCKKLRNGVKYCKVLRLPEILCIHLKRFRHEVMYSFKINSHVSFPLEGLDLRPFLAKECTSQITTYDLLSVICHHGTAGSGHYIAYCQNVINGQWYEFDDQYVTEVHETVVQNAEGYVLFYRKSSEEAMRERQQVVSLAAMREPSLLRFYVSREWLNKFNTFAEPGPITNQTFLCSHGGIPPHKYHYIDDLVVILPQNVWEHLYNRFGGGPAVNHLYVCSICQVEIEALAKRRRIEIDTFIKLNKAFQAEESPGVIYCISMQWFREWEAFVKGKDNEPPGPIDNSRIAQVKGSGHVQLKQGADYGQISEETWTYLNSLYGGGPEIAIRQSVAQPLGPENLHGEQKIEAETRAV.

The UBP-type zinc finger occupies 6–111 (DLCPHLDSIG…GSSSKFSEQD (106 aa)). Zn(2+)-binding residues include C8, H10, C30, C33, C43, C48, C53, H60, H64, H70, C83, and C86. Phosphoserine is present on residues S112, S132, and S134. The USP domain occupies 145 to 685 (TGMKNLGNSC…EGYVLFYRKS (541 aa)). Residue C154 is the Nucleophile of the active site. Disordered stretches follow at residues 257–347 (LTEA…VDED) and 360–415 (QPAE…ASPV). T258 carries the post-translational modification Phosphothreonine. Over residues 259–279 (EARDSDSSDTDEKREGDRSPS) the composition is skewed to basic and acidic residues. Residue S305 is modified to Phosphoserine. Basic and acidic residues predominate over residues 316-332 (EAGRAISEKERMKDRKF). Phosphoserine is present on S368. Residue T377 is modified to Phosphothreonine. Phosphoserine occurs at positions 408 and 413. The active-site Proton acceptor is the H643. 2 consecutive DUSP domains span residues 687-780 (EEAM…LYVC) and 789-892 (ALAK…RQSV).

Belongs to the peptidase C19 family. USP20/USP33 subfamily. Interacts with VHL, leading to its ubiquitination and subsequent degradation. Interacts with CCP110. Interacts with DIO2. Interacts with HIF1A. Interacts with ADRB2. Interacts with USP18. Ubiquitinated via a VHL-dependent pathway for proteasomal degradation.

The protein resides in the cytoplasm. The protein localises to the endoplasmic reticulum. It is found in the perinuclear region. Its subcellular location is the cytoskeleton. It localises to the microtubule organizing center. The protein resides in the centrosome. The catalysed reaction is Thiol-dependent hydrolysis of ester, thioester, amide, peptide and isopeptide bonds formed by the C-terminal Gly of ubiquitin (a 76-residue protein attached to proteins as an intracellular targeting signal).. Its function is as follows. Deubiquitinating enzyme that plays a role in many cellular processes including autophagy, cellular antiviral response or membrane protein biogenesis. Attenuates TLR4-mediated NF-kappa-B signaling by cooperating with beta-arrestin-2/ARRB2 and inhibiting TRAF6 autoubiquitination. Promotes cellular antiviral responses by deconjugating 'Lys-33' and 'Lys-48'-linked ubiquitination of STING1 leading to its stabilization. Plays an essential role in autophagy induction by regulating the ULK1 stability through deubiquitination of ULK1. Acts as a positive regulator for NF-kappa-B activation by TNF-alpha through deubiquitinating 'Lys-48'-linked polyubiquitination of SQSTM1, leading to its increased stability. Acts as a regulator of G-protein coupled receptor (GPCR) signaling by mediating the deubiquitination beta-2 adrenergic receptor (ADRB2). Plays a central role in ADRB2 recycling and resensitization after prolonged agonist stimulation by constitutively binding ADRB2, mediating deubiquitination of ADRB2 and inhibiting lysosomal trafficking of ADRB2. Upon dissociation, it is probably transferred to the translocated beta-arrestins, possibly leading to beta-arrestins deubiquitination and disengagement from ADRB2. This suggests the existence of a dynamic exchange between the ADRB2 and beta-arrestins. Deubiquitinates DIO2, thereby regulating thyroid hormone regulation. Deubiquitinates HIF1A, leading to stabilize HIF1A and enhance HIF1A-mediated activity. Deubiquitinates MCL1, a pivotal member of the anti-apoptotic Bcl-2 protein family to regulate its stability. Within the endoplasmic reticulum, participates with USP33 in the rescue of post-translationally targeted membrane proteins that are inappropriately ubiquitinated by the cytosolic protein quality control in the cytosol. The polypeptide is Ubiquitin carboxyl-terminal hydrolase 20 (USP20) (Homo sapiens (Human)).